The chain runs to 325 residues: MDQQGMVKKRLAVLVGCNYPNTRNELHGCINDVLAMKETILSRFGFKQDDIEVLTDEPESKVKPTGANIKAALRRMVDKAQAGSGDILFFHYSGHGTRIPSVKSAHPFKQDEAIVPCDFNLITDVDFRELVNQLPKGTSFTMISDSCHSGGLIDKEKEQIGPSSVSSNISPAIETTNKTITSRALPFKAVLDHLSSLTGITTSDIGTHLLELFGRDAGLKFRLPAMDLMDLLETMTAREKHVDSGILMSGCQADETSADVGVGNGKAYGAFSNAIQRVLNENEGAMKNKQLVMMARDVLERLGFHQHPCLYCSDQNADATFLSQP.

Catalysis depends on residues His95 and Cys147. The residue at position 147 (Cys147) is an S-nitrosocysteine. A glycan (N-linked (GlcNAc...) asparagine) is linked at Asn177.

Belongs to the peptidase C14B family. In terms of processing, the two subunits are derived from the precursor sequence by an autocatalytic mechanism. Post-translationally, S-nitrosylation at Cys-147 suppresses both autoprocessing and proteolytic activity of the full-length protein, but does not affect the activity of the mature processed form. As to expression, expressed in root tips, cauline leaves, flowers and siliques.

The protein resides in the secreted. Its subcellular location is the extracellular space. It localises to the apoplast. Its activity is regulated as follows. Inhibited by serpin ZX and nitric oxide through cysteine nitrosylation. Functionally, cysteine protease that cleaves specifically after arginine or lysine residues. Does not cleave caspase-specific substrates. Required for proteolytic processing of GRI. This is Metacaspase-9 (AMC9) from Arabidopsis thaliana (Mouse-ear cress).